A 615-amino-acid polypeptide reads, in one-letter code: Probable inactive purple acid phosphatase 24 (615 aa).

The first 26 residues, Met1–Gly26, serve as a signal peptide directing secretion. N-linked (GlcNAc...) asparagine glycans are attached at residues Asn129, Asn267, and Asn275. Asp297 lines the Fe cation pocket. A glycan (N-linked (GlcNAc...) asparagine) is linked at Asn318. Fe cation contacts are provided by Asp338 and Tyr341. Asp338 is a Zn(2+) binding site. Zn(2+) is bound by residues Asn371, His460, and His502. Substrate is bound at residue Asn371. A substrate-binding site is contributed by His502–His504. Residue His504 coordinates Fe cation. The N-linked (GlcNAc...) asparagine glycan is linked to Asn592.

Belongs to the metallophosphoesterase superfamily. Purple acid phosphatase family. In terms of assembly, homodimer. The cofactor is Fe cation. Zn(2+) is required as a cofactor. Specifically expressed in flowers.

The protein localises to the secreted. This is Probable inactive purple acid phosphatase 24 (PAP24) from Arabidopsis thaliana (Mouse-ear cress).